Here is a 456-residue protein sequence, read N- to C-terminus: Exodeoxyribonuclease 7 large subunit (456 aa).

Belongs to the XseA family. Heterooligomer composed of large and small subunits.

It localises to the cytoplasm. The enzyme catalyses Exonucleolytic cleavage in either 5'- to 3'- or 3'- to 5'-direction to yield nucleoside 5'-phosphates.. Bidirectionally degrades single-stranded DNA into large acid-insoluble oligonucleotides, which are then degraded further into small acid-soluble oligonucleotides. In Shigella boydii serotype 4 (strain Sb227), this protein is Exodeoxyribonuclease 7 large subunit.